A 251-amino-acid chain; its full sequence is Aliphatic sulfonates import ATP-binding protein SsuB (251 aa).

Positions 3–231 constitute an ABC transporter domain; that stretch reads VSIDGVSKYF…PRSKTSESFQ (229 aa). 39 to 46 is an ATP binding site; that stretch reads GPSGCGKS.

Belongs to the ABC transporter superfamily. Aliphatic sulfonates importer (TC 3.A.1.17.2) family. The complex is composed of two ATP-binding proteins (SsuB), two transmembrane proteins (SsuC) and a solute-binding protein (SsuA).

It is found in the cell membrane. The enzyme catalyses ATP + H2O + aliphatic sulfonate-[sulfonate-binding protein]Side 1 = ADP + phosphate + aliphatic sulfonateSide 2 + [sulfonate-binding protein]Side 1.. In terms of biological role, part of the ABC transporter complex SsuABC involved in aliphatic sulfonates import. Responsible for energy coupling to the transport system. The sequence is that of Aliphatic sulfonates import ATP-binding protein SsuB from Bacillus cereus (strain ATCC 10987 / NRS 248).